Consider the following 649-residue polypeptide: Cysteine-rich receptor-like protein kinase 2 (649 aa).

An N-terminal signal peptide occupies residues 1–29 (MKKEPVHILPLYLPCLLMFLLSSLRQITG). Over 30–258 (DARARAVKVT…IPRNGRSRGS (229 aa)) the chain is Extracellular. 2 consecutive Gnk2-homologous domains span residues 33 to 134 (ARAV…NYSF) and 139 to 245 (KGPE…DQDF). 5 N-linked (GlcNAc...) asparagine glycosylation sites follow: asparagine 47, asparagine 131, asparagine 149, asparagine 154, and asparagine 214. A helical transmembrane segment spans residues 259-279 (VVVIVVSVLSSVVVFMIGVAV). Residues 280–649 (SVYICKRRTI…TVSQSSFYGR (370 aa)) are Cytoplasmic-facing. The Protein kinase domain occupies 325 to 608 (FDNANKLGQG…HMLKNKEEVL (284 aa)). ATP-binding positions include 331-339 (LGQGGFGTV) and lysine 353. The residue at position 398 (tyrosine 398) is a Phosphotyrosine. The active-site Proton acceptor is aspartate 450. 2 positions are modified to phosphoserine: serine 454 and serine 483. Phosphothreonine occurs at positions 484 and 489. Tyrosine 497 bears the Phosphotyrosine mark.

This sequence belongs to the protein kinase superfamily. Ser/Thr protein kinase family. CRK subfamily.

Its subcellular location is the membrane. It carries out the reaction L-seryl-[protein] + ATP = O-phospho-L-seryl-[protein] + ADP + H(+). It catalyses the reaction L-threonyl-[protein] + ATP = O-phospho-L-threonyl-[protein] + ADP + H(+). The polypeptide is Cysteine-rich receptor-like protein kinase 2 (CRK2) (Arabidopsis thaliana (Mouse-ear cress)).